The chain runs to 501 residues: Glycerol kinase (501 aa).

ADP is bound at residue Thr16. 3 residues coordinate ATP: Thr16, Thr17, and Ser18. Thr16 is a binding site for sn-glycerol 3-phosphate. ADP is bound at residue Arg20. Residues Arg84, Glu85, Tyr135, and Asp242 each coordinate sn-glycerol 3-phosphate. 5 residues coordinate glycerol: Arg84, Glu85, Tyr135, Asp242, and Gln243. Positions 264 and 307 each coordinate ADP. 4 residues coordinate ATP: Thr264, Gly307, Gln311, and Gly408. Residue Gly408 coordinates ADP.

This sequence belongs to the FGGY kinase family.

It carries out the reaction glycerol + ATP = sn-glycerol 3-phosphate + ADP + H(+). It functions in the pathway polyol metabolism; glycerol degradation via glycerol kinase pathway; sn-glycerol 3-phosphate from glycerol: step 1/1. Functionally, key enzyme in the regulation of glycerol uptake and metabolism. Catalyzes the phosphorylation of glycerol to yield sn-glycerol 3-phosphate. The sequence is that of Glycerol kinase from Saccharolobus islandicus (strain L.S.2.15 / Lassen #1) (Sulfolobus islandicus).